Reading from the N-terminus, the 380-residue chain is Cystathionine gamma-synthase (380 aa).

K195 is modified (N6-(pyridoxal phosphate)lysine).

This sequence belongs to the trans-sulfuration enzymes family. As to quaternary structure, homotetramer. The cofactor is pyridoxal 5'-phosphate.

The protein localises to the cytoplasm. The catalysed reaction is O-succinyl-L-homoserine + L-cysteine = L,L-cystathionine + succinate + H(+). Functionally, catalyzes the formation of L-cystathionine from O-succinyl-L-homoserine (OSHS) and L-cysteine, via a gamma-replacement reaction. In the absence of thiol, catalyzes gamma-elimination to form 2-oxobutanoate, succinate and ammonia. The chain is Cystathionine gamma-synthase (metB) from Helicobacter pylori (strain J99 / ATCC 700824) (Campylobacter pylori J99).